The sequence spans 124 residues: Small ribosomal subunit protein uS12 (124 aa).

3-methylthioaspartic acid is present on Asp-89.

Belongs to the universal ribosomal protein uS12 family. As to quaternary structure, part of the 30S ribosomal subunit. Contacts proteins S8 and S17. May interact with IF1 in the 30S initiation complex.

Functionally, with S4 and S5 plays an important role in translational accuracy. In terms of biological role, interacts with and stabilizes bases of the 16S rRNA that are involved in tRNA selection in the A site and with the mRNA backbone. Located at the interface of the 30S and 50S subunits, it traverses the body of the 30S subunit contacting proteins on the other side and probably holding the rRNA structure together. The combined cluster of proteins S8, S12 and S17 appears to hold together the shoulder and platform of the 30S subunit. The chain is Small ribosomal subunit protein uS12 from Acinetobacter baylyi (strain ATCC 33305 / BD413 / ADP1).